Consider the following 154-residue polypeptide: Large-conductance mechanosensitive channel (154 aa).

Transmembrane regions (helical) follow at residues 14–34 and 86–106; these read VVDL…VNSL and VFIN…FFVV.

The protein belongs to the MscL family. In terms of assembly, homopentamer.

It is found in the cell membrane. Functionally, channel that opens in response to stretch forces in the membrane lipid bilayer. May participate in the regulation of osmotic pressure changes within the cell. This Dehalococcoides mccartyi (strain ATCC BAA-2100 / JCM 16839 / KCTC 5957 / BAV1) protein is Large-conductance mechanosensitive channel.